The chain runs to 234 residues: Elongation factor Tu (234 aa).

Positions 1–125 (KNMITGAAQM…EVDAFIPTPE (125 aa)) constitute a tr-type G domain. A GTP-binding site is contributed by 47–50 (NKQD).

The protein belongs to the TRAFAC class translation factor GTPase superfamily. Classic translation factor GTPase family. EF-Tu/EF-1A subfamily. Monomer.

Its subcellular location is the cytoplasm. The catalysed reaction is GTP + H2O = GDP + phosphate + H(+). Its function is as follows. GTP hydrolase that promotes the GTP-dependent binding of aminoacyl-tRNA to the A-site of ribosomes during protein biosynthesis. The polypeptide is Elongation factor Tu (tufA) (Prochlorothrix hollandica).